The primary structure comprises 214 residues: Adenylate kinase (214 aa).

10-15 is an ATP binding site; that stretch reads GAGKGT. The NMP stretch occupies residues 30 to 59; the sequence is STGDMLRGAIKAGTDLGKQAKTLMDAGQLV. Residues T31, R36, 57 to 59, 85 to 88, and Q92 each bind AMP; these read QLV and GFPR. Residues 122-159 are LID; that stretch reads GRRVHQASGRTYHVVYNPPKVEGKDDVTGEDLIIRADD. Residues R123 and 132 to 133 contribute to the ATP site; that span reads TY. AMP contacts are provided by R156 and R167. ATP is bound at residue K200.

It belongs to the adenylate kinase family. In terms of assembly, monomer.

It localises to the cytoplasm. It catalyses the reaction AMP + ATP = 2 ADP. It functions in the pathway purine metabolism; AMP biosynthesis via salvage pathway; AMP from ADP: step 1/1. Its function is as follows. Catalyzes the reversible transfer of the terminal phosphate group between ATP and AMP. Plays an important role in cellular energy homeostasis and in adenine nucleotide metabolism. The protein is Adenylate kinase of Pasteurella multocida (strain Pm70).